We begin with the raw amino-acid sequence, 510 residues long: Beta-glucosidase 12 (510 aa).

The first 24 residues, 1–24, serve as a signal peptide directing secretion; the sequence is MAAAGAMPGGLLLTFLLLAVVASG. Q53 provides a ligand contact to a beta-D-glucoside. N122 carries an N-linked (GlcNAc...) asparagine glycan. A beta-D-glucoside-binding positions include H157 and 202–203; that span reads NE. E203 functions as the Proton donor in the catalytic mechanism. Intrachain disulfides connect C208–C243 and C222–C230. A glycan (N-linked (GlcNAc...) asparagine) is linked at N229. An a beta-D-glucoside-binding site is contributed by Y346. N-linked (GlcNAc...) asparagine glycans are attached at residues N361 and N371. E417 contacts a beta-D-glucoside. E417 serves as the catalytic Nucleophile. N425 carries an N-linked (GlcNAc...) asparagine glycan. A beta-D-glucoside contacts are provided by residues W466, 473 to 474, and F482; that span reads EW.

Belongs to the glycosyl hydrolase 1 family.

The protein resides in the secreted. The enzyme catalyses Hydrolysis of terminal, non-reducing beta-D-glucosyl residues with release of beta-D-glucose.. In terms of biological role, hydrolyzes p-nitrophenyl beta-D-glucoside, p-nitrophenyl beta-D-galactoside, p-nitrophenyl beta-D-xyloside, p-nitrophenyl beta-D-fucoside, p-nitrophenyl beta-L-arabinoside, cello-oligosaccharides and laminaribiose. In Oryza sativa subsp. japonica (Rice), this protein is Beta-glucosidase 12.